We begin with the raw amino-acid sequence, 170 residues long: Cathelicidin antimicrobial peptide (170 aa).

The signal sequence occupies residues methionine 1–alanine 30. A propeptide spans glutamine 31–arginine 131 (cathelin-like domain (CLD)). 2 disulfide bridges follow: cysteine 86-cysteine 97 and cysteine 108-cysteine 125. The segment at phenylalanine 150–glutamine 162 is active core.

It belongs to the cathelicidin family. Monomer, homodimer or homotrimer (in vitro). Oligomerizes as tetra- or hexamer in solution (in vitro). Proteolytically cleaved by proteinase PRTN3 into antibacterial peptide LL-37. Proteolytically cleaved by cathepsin CTSG and neutrophil elastase ELANE. In terms of processing, resistant to proteolytic degradation in solution, and when bound to both zwitterionic (mimicking mammalian membranes) and negatively charged membranes (mimicking bacterial membranes). Post-translationally, after secretion onto the skin surface, the CAMP gene product is processed by a serine protease-dependent mechanism into multiple novel antimicrobial peptides distinct from and shorter than cathelicidin LL-37. These peptides show enhanced antimicrobial action, acquiring the ability to kill skin pathogens such as S.aureus, E.coli and C.albicans. These peptides have lost the ability to stimulate CXCL8/IL8 release from keratinocytes. The peptides act synergistically, killing bacteria at lower concentrations when present together, and maintain activity at increased salt condition.

It localises to the secreted. The protein resides in the vesicle. In terms of biological role, antimicrobial protein that is an integral component of the innate immune system. Binds to bacterial lipopolysaccharides (LPS). Acts via neutrophil N-formyl peptide receptors to enhance the release of CXCL2. Postsecretory processing generates multiple cathelicidin antimicrobial peptides with various lengths which act as a topical antimicrobial defense in sweat on skin. The unprocessed precursor form, cathelicidin antimicrobial peptide, inhibits the growth of Gram-negative E.coli and E.aerogenes with efficiencies comparable to that of the mature peptide LL-37 (in vitro). Its function is as follows. Antimicrobial peptide that is an integral component of the innate immune system. Binds to bacterial lipopolysaccharides (LPS). Causes membrane permeabilization by forming transmembrane pores (in vitro). Causes lysis of E.coli. Exhibits antimicrobial activity against Gram-negative bacteria such as P.aeruginosa, S.typhimurium, E.aerogenes, E.coli and P.syringae, Gram-positive bacteria such as L.monocytogenes, S.epidermidis, S.pyogenes and S.aureus, as well as vancomycin-resistant enterococci (in vitro). Exhibits antimicrobial activity against methicillin-resistant S.aureus, P.mirabilis, and C.albicans in low-salt media, but not in media containing 100 mM NaCl (in vitro). Forms chiral supramolecular assemblies with quinolone signal (PQS) molecules of P.aeruginosa, which may lead to interference of bacterial quorum signaling and perturbance of bacterial biofilm formation. May form supramolecular fiber-like assemblies on bacterial membranes. Induces cytokine and chemokine producation as well as TNF/TNFA and CSF2/GMCSF production in normal human keratinocytes. Exhibits hemolytic activity against red blood cells. Functionally, exhibits antimicrobial activity against E.coli and B.megaterium (in vitro). This Nomascus concolor (Black crested gibbon) protein is Cathelicidin antimicrobial peptide.